The sequence spans 120 residues: Large ribosomal subunit protein bL20 (120 aa).

This sequence belongs to the bacterial ribosomal protein bL20 family.

In terms of biological role, binds directly to 23S ribosomal RNA and is necessary for the in vitro assembly process of the 50S ribosomal subunit. It is not involved in the protein synthesizing functions of that subunit. This is Large ribosomal subunit protein bL20 from Cereibacter sphaeroides (strain ATCC 17025 / ATH 2.4.3) (Rhodobacter sphaeroides).